The chain runs to 1450 residues: Inactive serine/threonine-protein kinase TEX14 (1450 aa).

ANK repeat units follow at residues 27–54 (LHEY…AVNT), 55–84 (QGQS…DPNH), and 88–117 (DGST…DLRL). Residues S175 and S186 each carry the phosphoserine modification. One can recognise a Protein kinase domain in the interval 199 to 512 (IISAQNIYSF…ILKNDLKEFI (314 aa)). Residues 205–213 (IYSFGFGKF) and K267 contribute to the ATP site. S431 carries the phosphoserine; by PLK1 modification. Phosphoserine occurs at positions 561 and 662. Residues 700 to 720 (SDSLGSLNLPEPTREAKGKTS) are disordered. The short motif at 791–797 (GPPSLAY) is the GPPX3Y element. 4 disordered regions span residues 852 to 906 (VSEE…MASV), 947 to 977 (PPWN…RGPE), 992 to 1012 (DEPK…DKNK), and 1035 to 1062 (QPEQ…SSPI). Composition is skewed to polar residues over residues 875-886 (KQSTGEQLPSTQ) and 894-906 (KNTN…MASV). A D-box motif is present at residues 889-897 (RESLEKNTN). A compositionally biased stretch (basic and acidic residues) spans 992–1011 (DEPKGNTKFGKMDNSDCDKN). Residues 1038–1061 (QNEASQASCDTSVGTEKFYSTSSP) are compositionally biased toward polar residues. Phosphoserine is present on residues S1060 and S1221. Disordered regions lie at residues 1261 to 1282 (THAT…QQHL) and 1300 to 1418 (KQQQ…SLGT). Polar residues-rich tracts occupy residues 1300-1311 (KQQQVSSLASHE) and 1332-1344 (TNSS…LSSR). A phosphoserine mark is found at S1357 and S1358. Basic and acidic residues-rich tracts occupy residues 1383–1397 (STRE…VVEQ) and 1404–1413 (SIKPERRESD). Residues S1412 and S1449 each carry the phosphoserine modification.

It belongs to the protein kinase superfamily. In terms of assembly, interacts with KIF23 and RBM44. Interacts with CEP55; inhibiting interaction between CEP55 and PDCD6IP/ALIX and TSG101. In terms of processing, phosphorylated on Thr residues by CDK1 during early phases of mitosis, promoting the interaction with PLK1 and recruitment to kinetochores. Phosphorylated on Ser-431 by PLK1 during late prometaphase promotes the rapid depletion from kinetochores and its subsequent degradation by the APC/C complex. In terms of tissue distribution, detected in testis and spermatogonia. Not detectable in the other tissues tested.

Its subcellular location is the cytoplasm. The protein resides in the midbody. It localises to the chromosome. The protein localises to the centromere. It is found in the kinetochore. Functionally, required both for the formation of intercellular bridges during meiosis and for kinetochore-microtubule attachment during mitosis. Intercellular bridges are evolutionarily conserved structures that connect differentiating germ cells and are required for spermatogenesis and male fertility. Acts by promoting the conversion of midbodies into intercellular bridges via its interaction with CEP55: interaction with CEP55 inhibits the interaction between CEP55 and PDCD6IP/ALIX and TSG101, blocking cell abscission and leading to transform midbodies into intercellular bridges. Also plays a role during mitosis: recruited to kinetochores by PLK1 during early mitosis and regulates the maturation of the outer kinetochores and microtubule attachment. Has no protein kinase activity in vitro. The chain is Inactive serine/threonine-protein kinase TEX14 (Tex14) from Mus musculus (Mouse).